We begin with the raw amino-acid sequence, 146 residues long: Bifunctional adenosine 5'-phosphosulfate phosphorylase/adenylylsulfatase HINT4 (146 aa).

In terms of domain architecture, HIT spans 9-120; that stretch reads IFCEIVRNPT…YVPRWKAIKY (112 aa). The short motif at 101–105 is the Histidine triad motif element; sequence HLHLH. His105 acts as the Tele-AMP-histidine intermediate in catalysis.

As to quaternary structure, homodimer.

Its subcellular location is the peroxisome. It carries out the reaction sulfate + ADP + H(+) = adenosine 5'-phosphosulfate + phosphate. The enzyme catalyses adenosine 5'-phosphosulfate + H2O = sulfate + AMP + 2 H(+). The adenosine 5'-phosphosulfate phosphorylase activity is enhanced at low pH. Its function is as follows. Possesses adenylylsulfatase activity in vitro, releasing AMP and sulfate from adenylyl sulfate. Also possesses adenosine 5'-phosphosulfate (APS) phosphorylase activity in vitro. Catalyzes the phosphorolysis of APS, leading to ADP and sulfate. In Arabidopsis thaliana (Mouse-ear cress), this protein is Bifunctional adenosine 5'-phosphosulfate phosphorylase/adenylylsulfatase HINT4.